Here is a 400-residue protein sequence, read N- to C-terminus: Putative cytochrome P450 141 (400 aa).

A run of 2 helical transmembrane segments spans residues 225–245 (VVGMLLTVVIGGVDTPIAVIT) and 294–314 (VVIAGTALSAGSPAFTSITSA). C346 contacts heme.

This sequence belongs to the cytochrome P450 family. It depends on heme as a cofactor.

It localises to the cell membrane. The polypeptide is Putative cytochrome P450 141 (cyp141) (Mycobacterium tuberculosis (strain CDC 1551 / Oshkosh)).